Reading from the N-terminus, the 321-residue chain is Biotin synthase (321 aa).

In terms of domain architecture, Radical SAM core spans 44-270 (RGVRIHILNN…DAEVRAAGGR (227 aa)). [4Fe-4S] cluster contacts are provided by Cys59, Cys63, and Cys66. [2Fe-2S] cluster contacts are provided by Cys103, Cys135, Cys195, and Arg265.

This sequence belongs to the radical SAM superfamily. Biotin synthase family. Homodimer. [4Fe-4S] cluster is required as a cofactor. [2Fe-2S] cluster serves as cofactor.

The catalysed reaction is (4R,5S)-dethiobiotin + (sulfur carrier)-SH + 2 reduced [2Fe-2S]-[ferredoxin] + 2 S-adenosyl-L-methionine = (sulfur carrier)-H + biotin + 2 5'-deoxyadenosine + 2 L-methionine + 2 oxidized [2Fe-2S]-[ferredoxin]. The protein operates within cofactor biosynthesis; biotin biosynthesis; biotin from 7,8-diaminononanoate: step 2/2. Its function is as follows. Catalyzes the conversion of dethiobiotin (DTB) to biotin by the insertion of a sulfur atom into dethiobiotin via a radical-based mechanism. The polypeptide is Biotin synthase (Magnetococcus marinus (strain ATCC BAA-1437 / JCM 17883 / MC-1)).